Reading from the N-terminus, the 363-residue chain is 1,2-Dihydrovomilenine reductase (363 aa).

The region spanning 24 to 352 is the Enoyl reductase (ER) domain; the sequence is GILSPFKFSR…KGDVRYRFVI (329 aa). Cys51 serves as a coordination point for Zn(2+). Ser53 is an NADP(+) binding site. Zn(2+) contacts are provided by Asp54, Glu74, Cys104, Cys107, Cys110, and Cys118. Positions 193, 195, 196, 215, 216, 217, 220, 221, 278, 280, 302, and 349 each coordinate NADP(+).

Belongs to the zinc-containing alcohol dehydrogenase family. Class-P subfamily. In terms of assembly, homodimer. Zn(2+) serves as cofactor. In terms of tissue distribution, mainly expressed in mature roots and, to a lower extent, in stems and leaves.

The protein resides in the cytoplasm. It carries out the reaction 17-O-acetylnorajmaline + NADP(+) = (2R)-1,2-dihydrovomilenine + NADPH + 2 H(+). The catalysed reaction is (20S)-19,20-dihydrovomilenine + NADP(+) = vomilenine + NADPH + H(+). It participates in alkaloid biosynthesis; ajmaline biosynthesis. Alcohol dehydrogenase involved in the biosynthesis of ajmaline-type monoterpenoid indole alkaloids (MIAs) natural products, important plant-derived pharmaceuticals used in the therapy of heart disorders. Catalyzes the conversion of 1,2-dihydrovomilenine to 17-O-acetylnorajmaline, an intermediate chemical in the biosynthesis of ajmaline. Also able, with a lower efficiency, to convert vomilenine into 19,20-dihydrovomilenine. The polypeptide is 1,2-Dihydrovomilenine reductase (Rauvolfia serpentina (Serpentine wood)).